Here is a 123-residue protein sequence, read N- to C-terminus: WAP four-disulfide core domain protein 5 (123 aa).

The first 24 residues, 1 to 24 (MRIQSLLLLGALLAVGSQLPAVFG), serve as a signal peptide directing secretion. WAP domains are found at residues 27–73 (KGEK…CVPR) and 74–121 (VSVK…RDPA). 8 cysteine pairs are disulfide-bonded: Cys-34–Cys-62, Cys-41–Cys-66, Cys-49–Cys-61, Cys-55–Cys-70, Cys-81–Cys-109, Cys-88–Cys-113, Cys-96–Cys-108, and Cys-102–Cys-117.

The protein localises to the secreted. Putative acid-stable proteinase inhibitor. This is WAP four-disulfide core domain protein 5 (WFDC5) from Pongo abelii (Sumatran orangutan).